We begin with the raw amino-acid sequence, 199 residues long: LIM domain-containing protein E (199 aa).

The region spanning 5–65 (VKCGACAKTA…PVHTPKVSAT (61 aa)) is the LIM zinc-binding domain. Positions 134–199 (YAVFGADGQP…EEEQQYEEEQ (66 aa)) are disordered. Low complexity-rich tracts occupy residues 146 to 155 (EQQEQQQYTE) and 163 to 174 (EEQQYQEEQQQY). Positions 175-199 (QEEEQQYQEEEQQYQEEEQQYEEEQ) are enriched in acidic residues.

As to quaternary structure, may interact with rac1A.

It localises to the cytoplasm. The protein localises to the cell cortex. The protein resides in the nucleus. Its subcellular location is the cell projection. It is found in the lamellipodium. It localises to the filopodium. The protein localises to the cytoskeleton. Its function is as follows. Associates with the actin cytoskeleton and may regulate actin polymerization in lamellipodia, through a rac1-dependent signaling pathway. May play a role in cell motility. Involved in cytokinesis by regulating the microtubule system and linking it to the cortical actin network. This is LIM domain-containing protein E (limE) from Dictyostelium discoideum (Social amoeba).